Reading from the N-terminus, the 691-residue chain is DNA ligase (691 aa).

NAD(+) is bound by residues 36–40 (DAEYD), 85–86 (SL), and Glu118. The N6-AMP-lysine intermediate role is filled by Lys120. NAD(+) is bound by residues Arg141, Glu178, Lys295, and Lys319. Positions 413, 416, 431, and 437 each coordinate Zn(2+). The BRCT domain maps to 595–684 (GRPQPLAGQT…ESASSEDAQP (90 aa)).

It belongs to the NAD-dependent DNA ligase family. LigA subfamily. It depends on Mg(2+) as a cofactor. Mn(2+) serves as cofactor.

It catalyses the reaction NAD(+) + (deoxyribonucleotide)n-3'-hydroxyl + 5'-phospho-(deoxyribonucleotide)m = (deoxyribonucleotide)n+m + AMP + beta-nicotinamide D-nucleotide.. Its function is as follows. DNA ligase that catalyzes the formation of phosphodiester linkages between 5'-phosphoryl and 3'-hydroxyl groups in double-stranded DNA using NAD as a coenzyme and as the energy source for the reaction. It is essential for DNA replication and repair of damaged DNA. The polypeptide is DNA ligase (Chromohalobacter salexigens (strain ATCC BAA-138 / DSM 3043 / CIP 106854 / NCIMB 13768 / 1H11)).